Here is a 604-residue protein sequence, read N- to C-terminus: Glucose oxidase (604 aa).

The first 18 residues, 1–18 (MKSTIITSILFSVATVQA), serve as a signal peptide directing secretion. FAD contacts are provided by L52, T53, and E73. N-linked (GlcNAc...) asparagine glycosylation occurs at N111. S125, N129, G130, and S132 together coordinate FAD. C186 and C228 form a disulfide bridge. An N-linked (GlcNAc...) asparagine glycan is attached at N213. Residue V272 coordinates FAD. N-linked (GlcNAc...) asparagine glycosylation is found at N278, N409, and N531. H537 acts as the Proton acceptor in catalysis. O2-binding residues include K558 and V559. Positions 570 and 582 each coordinate FAD.

This sequence belongs to the GMC oxidoreductase family. In terms of assembly, homodimer. The cofactor is FAD.

Its subcellular location is the secreted. It localises to the cell wall. It is found in the cytoplasm. The protein localises to the extracellular space. The protein resides in the extracellular matrix. The catalysed reaction is beta-D-glucose + O2 = D-glucono-1,5-lactone + H2O2. Its function is as follows. Glucose oxidase catalyzes the oxidation of beta-D-glucose to D-glucono-delta-lactone and hydrogen peroxide in the presence of molecular oxygen. The enzyme also catalyzes the reaction with D-xylose but at a much lower rate. Shows any activities against D-fructose, D-galactose and D-arabinose. The enzyme is cytotoxic for a series of bacteria, yeasts and filamentous fungi and acts primarily via the liberation of H(2)O(2), which is a harmful oxidative stress-generating agent. The protein is Glucose oxidase of Penicillium chrysogenum (Penicillium notatum).